A 174-amino-acid polypeptide reads, in one-letter code: Gamma-crystallin C (174 aa).

Beta/gamma crystallin 'Greek key' domains lie at 2 to 40 and 41 to 83; these read GKIT…RVDS and GCWM…RLIP. S-methylcysteine is present on Cys-23. The tract at residues 84–87 is connecting peptide; the sequence is HAGS. Beta/gamma crystallin 'Greek key' domains are found at residues 88 to 128 and 129 to 171; these read HRMR…QVLE and GCWV…RRVV.

Belongs to the beta/gamma-crystallin family.

In terms of biological role, crystallins are the dominant structural components of the vertebrate eye lens. This Mus musculus (Mouse) protein is Gamma-crystallin C (Crygc).